Consider the following 806-residue polypeptide: Lysine-specific demethylase JMJ15 (806 aa).

The disordered stretch occupies residues 1-43; that stretch reads MEPFSAAQNKEDKDTSVEPPRRRCHRKNKGTNVEPPSSPYHPK. Positions 9–21 are enriched in basic and acidic residues; that stretch reads NKEDKDTSVEPPR. The JmjN domain occupies 61–102; it reads APVFHPTSEEFEDTLAYIEKIRPLAESFGICRIVPPSNWSPP. A disordered region spans residues 128–176; it reads NRGPVKKKTPKGRKRKRGKYSRTVAPKKRNGSVSKSVSTPKATEEENFG. Residues 131 to 157 show a composition bias toward basic residues; it reads PVKKKTPKGRKRKRGKYSRTVAPKKRN. A Nuclear localization signal motif is present at residues 132–139; the sequence is VKKKTPKG. Positions 158–168 are enriched in polar residues; sequence GSVSKSVSTPK. The JmjC domain maps to 261 to 427; it reads KYISSGWNLN…HGQNAVEIYS (167 aa). Fe cation contacts are provided by H307, E309, and H395. The Zn(2+) site is built by C514, C517, C528, C531, C539, H542, C545, and C547. Residues 514-566 form a C5HC2 zinc finger; that stretch reads CISCFSDLHLSATGCKNCSSLEEYGCTKHDICSCEGKDRFIFLRYTIDELSSL. Residues 629 to 687 form the FYR N-terminal domain; the sequence is IMDLAAYHVEPINLGFLVVGKLWCNKHAIFPKGFKSRVKFYNVQDPMRISYYVSEIVDA. The region spanning 689–775 is the FYR C-terminal domain; it reads LLGPLFKVTL…HGQVEYWNHK (87 aa).

It belongs to the JARID1 histone demethylase family. The cofactor is Fe(2+). In terms of tissue distribution, expressed in roots, cotyledons, shoot apex, rosette and cauline leaves, stems, inflorescences and siliques. Expressed at low levels during vegetative growth but to higher levels in young floral organs.

It localises to the nucleus. It catalyses the reaction N(6),N(6),N(6)-trimethyl-L-lysyl(4)-[histone H3] + 2-oxoglutarate + O2 = N(6),N(6)-dimethyl-L-lysyl(4)-[histone H3] + formaldehyde + succinate + CO2. Functionally, histone demethylase that demethylates 'Lys-4' (H3K4me) of histone H3 with a specific activity for H3K4me3. No activity on H3K4me2, H3K4me1, H3K9me3/2, H3K27me3/2 and H3K36me3/2. Involved in the control of flowering time by demethylating H3K4me3 at the FLC locus and repressing its expression. The repression of FLC level and reduction in H3K4me3 at the FLC locus results in induction of the flowering activator FT, which is a downstream target of FLC. Promotes salt tolerance by down-regulating the expression of several transcriptions factors involved in stress responses via H3K4me3 and H3K4me2 demethylation. The polypeptide is Lysine-specific demethylase JMJ15 (Arabidopsis thaliana (Mouse-ear cress)).